A 324-amino-acid polypeptide reads, in one-letter code: Serine racemase (324 aa).

3 residues coordinate ATP: Ser-32, Lys-51, and Thr-52. Lys-56 functions as the Proton acceptor in the catalytic mechanism. Position 56 is an N6-(pyridoxal phosphate)lysine (Lys-56). Thr-78 contributes to the Ca(2+) binding site. The active-site Proton acceptor is the Ser-81. Pyridoxal 5'-phosphate is bound at residue Asn-83. The ATP site is built by Gln-86 and Tyr-118. Position 175 (Asp-175) interacts with Mg(2+). The pyridoxal 5'-phosphate site is built by Gly-182, Gly-183, Gly-184, and Gly-185. Residues Glu-207, Ala-211, and Asp-213 each coordinate Ca(2+). Mg(2+)-binding residues include Glu-207, Ala-211, and Asp-213. Mn(2+) contacts are provided by Glu-207, Ala-211, and Asp-213. Residue Lys-277 participates in ATP binding. Residue Ser-310 participates in pyridoxal 5'-phosphate binding. Asn-313 is a binding site for ATP.

The protein belongs to the serine/threonine dehydratase family. In terms of assembly, homodimer. Mg(2+) serves as cofactor. Mn(2+) is required as a cofactor. The cofactor is Ca(2+). Requires pyridoxal 5'-phosphate as cofactor.

It catalyses the reaction L-serine = D-serine. The enzyme catalyses L-serine = pyruvate + NH4(+). The catalysed reaction is D-serine = pyruvate + NH4(+). Catalyzes the synthesis of D-serine from L-serine. Has dehydratase activity towards both L-serine and D-serine. In Dictyostelium discoideum (Social amoeba), this protein is Serine racemase (srr).